We begin with the raw amino-acid sequence, 341 residues long: Tetraacyldisaccharide 4'-kinase (341 aa).

Residue 54–61 coordinates ATP; it reads TVGGAGKT.

Belongs to the LpxK family.

The enzyme catalyses a lipid A disaccharide + ATP = a lipid IVA + ADP + H(+). It participates in glycolipid biosynthesis; lipid IV(A) biosynthesis; lipid IV(A) from (3R)-3-hydroxytetradecanoyl-[acyl-carrier-protein] and UDP-N-acetyl-alpha-D-glucosamine: step 6/6. Its function is as follows. Transfers the gamma-phosphate of ATP to the 4'-position of a tetraacyldisaccharide 1-phosphate intermediate (termed DS-1-P) to form tetraacyldisaccharide 1,4'-bis-phosphate (lipid IVA). The sequence is that of Tetraacyldisaccharide 4'-kinase from Brucella melitensis biotype 1 (strain ATCC 23456 / CCUG 17765 / NCTC 10094 / 16M).